The following is a 147-amino-acid chain: Large ribosomal subunit protein bL9 (147 aa).

Belongs to the bacterial ribosomal protein bL9 family.

Its function is as follows. Binds to the 23S rRNA. This Natranaerobius thermophilus (strain ATCC BAA-1301 / DSM 18059 / JW/NM-WN-LF) protein is Large ribosomal subunit protein bL9.